Here is a 283-residue protein sequence, read N- to C-terminus: Cyclin-C (283 aa).

Positions 46 to 144 (NVIQALGEHL…ILECEFYLLE (99 aa)) constitute a Cyclin N-terminal domain. A disordered region spans residues 252–283 (TILNKMPKPKPPPNSEGEQGTNGSQSSGYSQS). Residues 267–283 (EGEQGTNGSQSSGYSQS) are compositionally biased toward polar residues.

Belongs to the cyclin family. Cyclin C subfamily. As to quaternary structure, component of the Mediator complex. The cylin/CDK pair formed by ccnc/cdk8 also associates with the large subunit of RNA polymerase II.

It localises to the nucleus. Component of the Mediator complex, a coactivator involved in regulated gene transcription of nearly all RNA polymerase II-dependent genes. Mediator functions as a bridge to convey information from gene-specific regulatory proteins to the basal RNA polymerase II transcription machinery. Mediator is recruited to promoters by direct interactions with regulatory proteins and serves as a scaffold for the assembly of a functional preinitiation complex with RNA polymerase II and the general transcription factors. Binds to and activates cyclin-dependent kinase cdk8 that phosphorylates the CTD (C-terminal domain) of the large subunit of RNA polymerase II (RNAp II), which may inhibit the formation of a transcription initiation complex. The sequence is that of Cyclin-C (ccnc) from Xenopus tropicalis (Western clawed frog).